The sequence spans 624 residues: Altered inheritance of mitochondria protein 9, mitochondrial (624 aa).

A mitochondrion-targeting transit peptide spans 1–34 (MLSRVARCSRTLNQVTRNGQSGLFSAVLRTSIRQ).

It belongs to the AIM9 family.

It is found in the mitochondrion. The protein is Altered inheritance of mitochondria protein 9, mitochondrial (AIM9) of Candida albicans (strain WO-1) (Yeast).